The following is a 148-amino-acid chain: Large ribosomal subunit protein bL9 (148 aa).

This sequence belongs to the bacterial ribosomal protein bL9 family.

In terms of biological role, binds to the 23S rRNA. The protein is Large ribosomal subunit protein bL9 of Pseudomonas savastanoi pv. phaseolicola (strain 1448A / Race 6) (Pseudomonas syringae pv. phaseolicola (strain 1448A / Race 6)).